The sequence spans 37 residues: Large ribosomal subunit protein bL36 (37 aa).

Belongs to the bacterial ribosomal protein bL36 family.

In Dehalococcoides mccartyi (strain ATCC BAA-2266 / KCTC 15142 / 195) (Dehalococcoides ethenogenes (strain 195)), this protein is Large ribosomal subunit protein bL36.